Here is a 603-residue protein sequence, read N- to C-terminus: Probable methyltransferase PMT4 (603 aa).

Residues 1–12 (MKVASVIGLRPR) lie on the Cytoplasmic side of the membrane. A helical; Signal-anchor for type II membrane protein membrane pass occupies residues 13 to 33 (ISGLLFLTLGVIALITILVPN). Topologically, residues 34–603 (SDSSSTTSTT…LVCQKPLLKK (570 aa)) are lumenal. N-linked (GlcNAc...) asparagine glycans are attached at residues asparagine 96 and asparagine 393.

This sequence belongs to the methyltransferase superfamily.

The protein localises to the endoplasmic reticulum membrane. This chain is Probable methyltransferase PMT4, found in Arabidopsis thaliana (Mouse-ear cress).